The following is a 207-amino-acid chain: MEETLNQEKMVEEIAKRIREILEILGENPDREGLRETPLRVARALLEMTSGLRTPQPQIKTFNLSEDGISEVEDQIILVKNIGFSSLCEHHLLPIIGKVHVAYIVGQERKVAGFSKIIRIVNYYASRPQIQERLVQQIADAIMNSDIHPKGVMVIGDALHMCAYVRGVKDREASLLSVATRGLFKNNVSLRNYVFRLLETSKKTSLL.

Residues cysteine 88, histidine 91, and cysteine 162 each contribute to the Zn(2+) site.

This sequence belongs to the GTP cyclohydrolase I family. Toroid-shaped homodecamer, composed of two pentamers of five dimers.

It carries out the reaction GTP + H2O = 7,8-dihydroneopterin 3'-triphosphate + formate + H(+). The protein operates within cofactor biosynthesis; 7,8-dihydroneopterin triphosphate biosynthesis; 7,8-dihydroneopterin triphosphate from GTP: step 1/1. In Sulfurisphaera tokodaii (strain DSM 16993 / JCM 10545 / NBRC 100140 / 7) (Sulfolobus tokodaii), this protein is GTP cyclohydrolase 1.